We begin with the raw amino-acid sequence, 206 residues long: Protein-methionine-sulfoxide reductase heme-binding subunit MsrQ (206 aa).

The next 6 membrane-spanning stretches (helical) occupy residues 10-30, 42-62, 75-95, 110-130, 147-167, and 169-189; these read VFIA…SAVL, LGLG…LQKL, LGLW…VFVL, PYII…VTSN, LVYV…RADL, and EWAI…PPVM.

It belongs to the MsrQ family. As to quaternary structure, heterodimer of a catalytic subunit (MsrP) and a heme-binding subunit (MsrQ). FMN is required as a cofactor. It depends on heme b as a cofactor.

The protein localises to the cell inner membrane. In terms of biological role, part of the MsrPQ system that repairs oxidized periplasmic proteins containing methionine sulfoxide residues (Met-O), using respiratory chain electrons. Thus protects these proteins from oxidative-stress damage caused by reactive species of oxygen and chlorine generated by the host defense mechanisms. MsrPQ is essential for the maintenance of envelope integrity under bleach stress, rescuing a wide series of structurally unrelated periplasmic proteins from methionine oxidation. MsrQ provides electrons for reduction to the reductase catalytic subunit MsrP, using the quinone pool of the respiratory chain. The chain is Protein-methionine-sulfoxide reductase heme-binding subunit MsrQ from Pseudomonas fluorescens (strain SBW25).